The chain runs to 431 residues: Alpha-gurjunene synthase (431 aa).

Mg(2+)-binding residues include aspartate 126 and aspartate 130. Residue arginine 267 participates in (2E,6E)-farnesyl diphosphate binding. Mg(2+) contacts are provided by asparagine 321 and serine 325. Residue lysine 328 coordinates (2E,6E)-farnesyl diphosphate. Residue glutamate 329 coordinates Mg(2+). 412 to 413 is a binding site for (2E,6E)-farnesyl diphosphate; it reads RY.

It belongs to the terpene synthase family. The cofactor is Mg(2+).

It catalyses the reaction (2E,6E)-farnesyl diphosphate = (-)-alpha-gurjunene + diphosphate. The catalysed reaction is (2E,6E)-farnesyl diphosphate + H2O = 5-hydroxy-alpha-gurjunene + diphosphate. The protein operates within secondary metabolite biosynthesis; terpenoid biosynthesis. Catalyzes the conversion of (2E,6E)-farnesyl diphosphate (FPP) into the sesquiterpene alcohols (-)-alpha-gurjunene and 5-hydroxy-alpha-gurjunene. Other unidentified sesquiterpene alcohols found to be catalyzed by MTPSL4 may arise from carbocation reaction intermediates along the catalytic cascade to gurjunene being quenched by a water molecule, yielding formation of the alcohols. This is Alpha-gurjunene synthase from Marchantia polymorpha (Common liverwort).